The sequence spans 211 residues: MKMIIQIFFIISLISTISFASVQDFCVADPKGPQSPSGYSCKNPDQVTENDFAFTGLGTAGNTSNIIKAAVTPAFAPAYAGINGLGVSLARLDLAGGGVIPLHTHPGASEVLVVIQGTICAGFISSANKVYLKTLNRGDSMVFPQGLLHFQLNSGKGPALAFVAFGSSSPGLQILPFALFANDLPSELVEATTFLSDAEVKKLKGVLGGTN.

An N-terminal signal peptide occupies residues 1–20 (MKMIIQIFFIISLISTISFA). A disulfide bond links Cys-26 and Cys-41. The Cupin type-1 domain maps to 55 to 201 (TGLGTAGNTS…TTFLSDAEVK (147 aa)). Residue Asn-62 is glycosylated (N-linked (GlcNAc...) asparagine). Residues His-103, His-105, and Glu-110 each contribute to the Mn(2+) site. Phosphoserine is present on Ser-140. His-149 lines the Mn(2+) pocket.

The protein belongs to the germin family. Oligomer (believed to be a pentamer but probably hexamer). As to expression, expressed in leaves and flowers.

The protein resides in the secreted. The protein localises to the extracellular space. It localises to the apoplast. Its function is as follows. May play a role in plant defense. Probably has no oxalate oxidase activity even if the active site is conserved. The protein is Germin-like protein subfamily 3 member 3 (GER3) of Arabidopsis thaliana (Mouse-ear cress).